Consider the following 241-residue polypeptide: Octanoyltransferase (241 aa).

Residues 38–227 (AGGPDTLLLL…AVCNALDGAL (190 aa)) enclose the BPL/LPL catalytic domain. Substrate contacts are provided by residues 85 to 92 (RGGKITWH), 157 to 159 (AIG), and 170 to 172 (GFA). The active-site Acyl-thioester intermediate is the Cys188.

Belongs to the LipB family.

The protein localises to the cytoplasm. The enzyme catalyses octanoyl-[ACP] + L-lysyl-[protein] = N(6)-octanoyl-L-lysyl-[protein] + holo-[ACP] + H(+). Its pathway is protein modification; protein lipoylation via endogenous pathway; protein N(6)-(lipoyl)lysine from octanoyl-[acyl-carrier-protein]: step 1/2. Catalyzes the transfer of endogenously produced octanoic acid from octanoyl-acyl-carrier-protein onto the lipoyl domains of lipoate-dependent enzymes. Lipoyl-ACP can also act as a substrate although octanoyl-ACP is likely to be the physiological substrate. The sequence is that of Octanoyltransferase from Mycobacterium marinum (strain ATCC BAA-535 / M).